Consider the following 337-residue polypeptide: S-adenosylmethionine:tRNA ribosyltransferase-isomerase (337 aa).

It belongs to the QueA family. Monomer.

The protein localises to the cytoplasm. It carries out the reaction 7-aminomethyl-7-carbaguanosine(34) in tRNA + S-adenosyl-L-methionine = epoxyqueuosine(34) in tRNA + adenine + L-methionine + 2 H(+). Its pathway is tRNA modification; tRNA-queuosine biosynthesis. In terms of biological role, transfers and isomerizes the ribose moiety from AdoMet to the 7-aminomethyl group of 7-deazaguanine (preQ1-tRNA) to give epoxyqueuosine (oQ-tRNA). The protein is S-adenosylmethionine:tRNA ribosyltransferase-isomerase of Legionella pneumophila subsp. pneumophila (strain Philadelphia 1 / ATCC 33152 / DSM 7513).